The primary structure comprises 362 residues: MAFDLKTEDGLITYLTKHLSLDVDTSGVKRLSGGFVNVTWRIKLNAPYQGHTSIILKHAQPHMSTDEDFKIGVERSVYEYQAIKLMMANREVLGGVDGIVSVPEGLNYDLENNALIMQDVGKMKTLLDYVTAKPPLATDIARLVGTEIGGFVARLHNIGRERRDDPEFKFFSGNIVGRTTSDQLYQTIIPNAAKYGVDDPLLPTVVKDLVDDVMHSEETLVMADLWSGNILLQLEEGNPSKLQKIYILDWELCKYGPASLDLGYFLGDCYLISRFQDEQVGTTMRQAYLQSYARTSKHSINYAKVTAGIAAHIVMWTDFMQWGSEEERINFVKKGVAAFHDARGNNDNGEITSTLLKESSTA.

ATP is bound by residues N37, K57, and 118–120 (QDV). D224 is an active-site residue. An ATP-binding site is contributed by 249–251 (DWE).

It belongs to the methylthioribose kinase family. Monomer. The cofactor is Mg(2+).

It carries out the reaction 4-hydroxytryptamine + ATP = norbaeocystin + ADP + H(+). The enzyme catalyses psilocin + ATP = psilocybin + ADP + H(+). The catalysed reaction is 4-hydroxy-N,N,N-trimethyltryptamine + ATP = aeruginascin + ADP + H(+). Its pathway is secondary metabolite biosynthesis. In terms of biological role, 4-hydroxytryptamine kinase; part of the gene cluster that mediates the biosynthesis of psilocybin, a psychotropic tryptamine-derived natural product. The first step in the pathway is the decarboxylation of L-tryptophan to tryptamine by the decarboxylase psiD. 4-hydroxy-L-tryptophan is accepted as substrate by psiD as well. The cytochrome P450 monooxygenase psiH then converts tryptamine to 4-hydroxytryptamine. The kinase psiK catalyzes the 4-O-phosphorylation step by converting 4-hydroxytryptamine into norbaeocystin. The methyltransferase psiM then catalyzes iterative methyl transfer to the amino group of norbaeocystin to yield psilocybin via a monomethylated intermediate, baeocystin. 4-hydroxy-6-methyl-l-tryptophancan also be converted the decarboxylase PsiD, kinase PsiK, and methyltransferase PsiM into respectively 6-methyl-norbaeocystin, 6-methylbaeocystin, and 6-methylpsilocybin. PsiK kinase can also turn psilocin into psilocybin. This activity may represent a protective mechanism to rephosphorylate the unstable psilocin to the stable psilocybin in case of intracellular ester cleavage. Moreover, psiK is able to O-phosphorylate the quaternary amine 4-hydroxy-N,N,N-trimethyltryptamine (4-OH-TMT) to yield aeruginascin, another bioactive compound found in Psilocybe species. The protein is 4-hydroxytryptamine kinase of Psilocybe cubensis (Psychedelic mushroom).